Here is a 472-residue protein sequence, read N- to C-terminus: ATP synthase subunit beta (472 aa).

Residue 160 to 167 (GGAGVGKT) coordinates ATP.

It belongs to the ATPase alpha/beta chains family. As to quaternary structure, F-type ATPases have 2 components, CF(1) - the catalytic core - and CF(0) - the membrane proton channel. CF(1) has five subunits: alpha(3), beta(3), gamma(1), delta(1), epsilon(1). CF(0) has three main subunits: a(1), b(2) and c(9-12). The alpha and beta chains form an alternating ring which encloses part of the gamma chain. CF(1) is attached to CF(0) by a central stalk formed by the gamma and epsilon chains, while a peripheral stalk is formed by the delta and b chains.

The protein localises to the cell membrane. The catalysed reaction is ATP + H2O + 4 H(+)(in) = ADP + phosphate + 5 H(+)(out). In terms of biological role, produces ATP from ADP in the presence of a proton gradient across the membrane. The catalytic sites are hosted primarily by the beta subunits. This Lachnoclostridium phytofermentans (strain ATCC 700394 / DSM 18823 / ISDg) (Clostridium phytofermentans) protein is ATP synthase subunit beta.